Consider the following 469-residue polypeptide: Glutamate--tRNA ligase (469 aa).

The 'HIGH' region motif lies at 11–21 (PSPTGFIHLGN). The segment covering 121-131 (PRYDGTWRPEP) has biased composition (basic and acidic residues). Residues 121–141 (PRYDGTWRPEPGKVLPEPPPG) are disordered. Positions 243–247 (KMSKR) match the 'KMSKS' region motif. Lysine 246 contacts ATP.

Belongs to the class-I aminoacyl-tRNA synthetase family. Glutamate--tRNA ligase type 1 subfamily. As to quaternary structure, monomer.

The protein localises to the cytoplasm. The catalysed reaction is tRNA(Glu) + L-glutamate + ATP = L-glutamyl-tRNA(Glu) + AMP + diphosphate. In terms of biological role, catalyzes the attachment of glutamate to tRNA(Glu) in a two-step reaction: glutamate is first activated by ATP to form Glu-AMP and then transferred to the acceptor end of tRNA(Glu). In Burkholderia multivorans (strain ATCC 17616 / 249), this protein is Glutamate--tRNA ligase.